The sequence spans 162 residues: Probable E3 ubiquitin-protein ligase XERICO (162 aa).

A helical transmembrane segment spans residues 12-28 (GMLCVILVNTALSISIV). The segment at 103-145 (CSVCLSKFQGDSEINKLKCGHLFHKTCLEKWIDYWNITCPLCR) adopts an RING-type; atypical zinc-finger fold.

Interacts with UBC8 and TULP9. In terms of tissue distribution, ubiquitous. Higher expression in actively growing tissues.

The protein resides in the membrane. The enzyme catalyses S-ubiquitinyl-[E2 ubiquitin-conjugating enzyme]-L-cysteine + [acceptor protein]-L-lysine = [E2 ubiquitin-conjugating enzyme]-L-cysteine + N(6)-ubiquitinyl-[acceptor protein]-L-lysine.. It participates in protein modification; protein ubiquitination. Functionally, function on abscisic acid homeostasis at post-translational level, probably through ubiquitin/proteasome-dependent substrate-specific degradation. This chain is Probable E3 ubiquitin-protein ligase XERICO (XERICO), found in Arabidopsis thaliana (Mouse-ear cress).